The primary structure comprises 182 residues: MLIGLTGTPGTGKTSVSKFLERKRHWKVIHLNEMIKEEHLYTEVDEVRDAVIADMELVRQRLEEIIGGKENEVIILESHLAHYIADIVIILRVYPPELKMRLKARGYSEEKIRENIEAEALDVILVEAFEWCKKVFEINTTGKSIEETEQHIEKIIDHILSGNEEELPEYKPGSIDWIDLVP.

Positions 10, 12, 13, 14, and 15 each coordinate ATP. The interval 30-53 is NMP; that stretch reads HLNEMIKEEHLYTEVDEVRDAVIA. The tract at residues 104–114 is LID; it reads ARGYSEEKIRE. Positions 105 and 143 each coordinate ATP.

The protein belongs to the adenylate kinase family. AK6 subfamily. In terms of assembly, interacts with uS11. Not a structural component of 40S pre-ribosomes, but transiently interacts with them by binding to uS11.

It catalyses the reaction AMP + ATP = 2 ADP. The catalysed reaction is ATP + H2O = ADP + phosphate + H(+). Functionally, broad-specificity nucleoside monophosphate (NMP) kinase that catalyzes the reversible transfer of the terminal phosphate group between nucleoside triphosphates and monophosphates. Also has ATPase activity. Involved in the late maturation steps of the 30S ribosomal particles, specifically 16S rRNA maturation. While NMP activity is not required for ribosome maturation, ATPase activity is. Associates transiently with small ribosomal subunit protein uS11. ATP hydrolysis breaks the interaction with uS11. May temporarily remove uS11 from the ribosome to enable a conformational change of the ribosomal RNA that is needed for the final maturation step of the small ribosomal subunit. The protein is Putative adenylate kinase of Methanosarcina barkeri (strain Fusaro / DSM 804).